An 862-amino-acid chain; its full sequence is Valine--tRNA ligase (862 aa).

A 'HIGH' region motif is present at residues 44 to 53; the sequence is NVTGSLHMGH. Zn(2+) is bound by residues C176, C179, C344, C347, C417, C420, C438, and C441. Positions 528-532 match the 'KMSKS' region motif; it reads KMSKS. An ATP-binding site is contributed by K531. Residues 802–862 adopt a coiled-coil conformation; that stretch reads RRRQEKRLKE…RIREALSQIG (61 aa).

Belongs to the class-I aminoacyl-tRNA synthetase family. ValS type 1 subfamily. In terms of assembly, monomer. Requires Zn(2+) as cofactor.

It is found in the cytoplasm. The catalysed reaction is tRNA(Val) + L-valine + ATP = L-valyl-tRNA(Val) + AMP + diphosphate. Catalyzes the attachment of valine to tRNA(Val). As ValRS can inadvertently accommodate and process structurally similar amino acids such as threonine, to avoid such errors, it has a 'posttransfer' editing activity that hydrolyzes mischarged Thr-tRNA(Val) in a tRNA-dependent manner. The chain is Valine--tRNA ligase from Thermus thermophilus (strain ATCC 27634 / DSM 579 / HB8).